The sequence spans 98 residues: UPF0175 protein VNG_0066H (98 aa).

This sequence belongs to the UPF0175 family.

In Halobacterium salinarum (strain ATCC 700922 / JCM 11081 / NRC-1) (Halobacterium halobium), this protein is UPF0175 protein VNG_0066H.